A 365-amino-acid chain; its full sequence is uncharacterized protein (365 aa).

The Radical SAM core domain occupies 45-289; sequence FSIGKSLTII…LKEVKKSNPK (245 aa). [4Fe-4S] cluster contacts are provided by C60, C68, and C71.

It depends on [4Fe-4S] cluster as a cofactor.

This is an uncharacterized protein from Methanocaldococcus jannaschii (strain ATCC 43067 / DSM 2661 / JAL-1 / JCM 10045 / NBRC 100440) (Methanococcus jannaschii).